The following is a 164-amino-acid chain: ATP synthase subunit b (164 aa).

The chain crosses the membrane as a helical span at residues 12-32; sequence FILVTGSVIVLLLLIKAFAWG.

It belongs to the ATPase B chain family. As to quaternary structure, F-type ATPases have 2 components, F(1) - the catalytic core - and F(0) - the membrane proton channel. F(1) has five subunits: alpha(3), beta(3), gamma(1), delta(1), epsilon(1). F(0) has three main subunits: a(1), b(2) and c(10-14). The alpha and beta chains form an alternating ring which encloses part of the gamma chain. F(1) is attached to F(0) by a central stalk formed by the gamma and epsilon chains, while a peripheral stalk is formed by the delta and b chains.

The protein resides in the cell membrane. In terms of biological role, f(1)F(0) ATP synthase produces ATP from ADP in the presence of a proton or sodium gradient. F-type ATPases consist of two structural domains, F(1) containing the extramembraneous catalytic core and F(0) containing the membrane proton channel, linked together by a central stalk and a peripheral stalk. During catalysis, ATP synthesis in the catalytic domain of F(1) is coupled via a rotary mechanism of the central stalk subunits to proton translocation. Its function is as follows. Component of the F(0) channel, it forms part of the peripheral stalk, linking F(1) to F(0). This chain is ATP synthase subunit b, found in Streptococcus equi subsp. zooepidemicus (strain MGCS10565).